We begin with the raw amino-acid sequence, 1077 residues long: Bifunctional helicase and thymine dioxygenase JBP2 (1077 aa).

Residues methionine 1–alanine 516 are thymine dioxygenase. 3 residues coordinate Fe cation: histidine 391, aspartate 393, and histidine 441. Residue arginine 455 coordinates 2-oxoglutarate. Residues lysine 517–arginine 1075 form a DNA Helicase region. Residues serine 531–lysine 706 form the Helicase ATP-binding domain. Position 544 to 551 (leucine 544 to threonine 551) interacts with ATP. Residues aspartate 657–histidine 660 carry the DEAH box motif. Positions lysine 871–aspartate 1032 constitute a Helicase C-terminal domain.

In the C-terminal section; belongs to the SNF2/RAD54 helicase family. This sequence in the N-terminal section; belongs to the TET family. JBP2 subfamily. It depends on Fe(2+) as a cofactor.

The protein resides in the nucleus. The enzyme catalyses ATP + H2O = ADP + phosphate + H(+). It carries out the reaction thymine + 2-oxoglutarate + O2 = 5-hydroxymethyluracil + succinate + CO2. Its function is as follows. Dioxygenase that catalyzes the first step of DNA base J (beta-d-glucosyl-HOMedU) biosynthesis by converting thymine to 5-hydroxymethyluracil (HOMedU). DNA base J is a hypermodified thymidine residue found in the genome of kinetoplastid parasites, which is localized primarily to repetitive DNA, namely the telomeres, and is implicated in the regulation of antigenic variation. Probably also acts as a DNA helicase. Recognizes and binds specific regions of the genome, hydrolyzes ATP and allows the DNA base J de novo synthesis. Involved in initial synthesis of DNA base J, JBP1 being able to act via the basal level of DNA base J and propagate further synthesis. In contrast to JBP1, it does not specifically bind DNA base J, however it binds chromatin. The polypeptide is Bifunctional helicase and thymine dioxygenase JBP2 (JBP2) (Trypanosoma brucei brucei (strain 927/4 GUTat10.1)).